We begin with the raw amino-acid sequence, 333 residues long: Holliday junction branch migration complex subunit RuvB (333 aa).

The segment at 1-182 is large ATPase domain (RuvB-L); the sequence is MDERLLSGES…FGVLSRLEYY (182 aa). Residues L21, R22, G63, K66, T67, T68, 129-131, R172, Y182, and R219 contribute to the ATP site; that span reads EDF. T67 lines the Mg(2+) pocket. Positions 183–253 are small ATPAse domain (RuvB-S); sequence TVDQLSAIVE…ITQMALELLQ (71 aa). The head domain (RuvB-H) stretch occupies residues 256–333; the sequence is KLGLDHIDHK…EHFGMEMPKV (78 aa). 2 residues coordinate DNA: R311 and R316.

The protein belongs to the RuvB family. In terms of assembly, homohexamer. Forms an RuvA(8)-RuvB(12)-Holliday junction (HJ) complex. HJ DNA is sandwiched between 2 RuvA tetramers; dsDNA enters through RuvA and exits via RuvB. An RuvB hexamer assembles on each DNA strand where it exits the tetramer. Each RuvB hexamer is contacted by two RuvA subunits (via domain III) on 2 adjacent RuvB subunits; this complex drives branch migration. In the full resolvosome a probable DNA-RuvA(4)-RuvB(12)-RuvC(2) complex forms which resolves the HJ.

It is found in the cytoplasm. The catalysed reaction is ATP + H2O = ADP + phosphate + H(+). Functionally, the RuvA-RuvB-RuvC complex processes Holliday junction (HJ) DNA during genetic recombination and DNA repair, while the RuvA-RuvB complex plays an important role in the rescue of blocked DNA replication forks via replication fork reversal (RFR). RuvA specifically binds to HJ cruciform DNA, conferring on it an open structure. The RuvB hexamer acts as an ATP-dependent pump, pulling dsDNA into and through the RuvAB complex. RuvB forms 2 homohexamers on either side of HJ DNA bound by 1 or 2 RuvA tetramers; 4 subunits per hexamer contact DNA at a time. Coordinated motions by a converter formed by DNA-disengaged RuvB subunits stimulates ATP hydrolysis and nucleotide exchange. Immobilization of the converter enables RuvB to convert the ATP-contained energy into a lever motion, pulling 2 nucleotides of DNA out of the RuvA tetramer per ATP hydrolyzed, thus driving DNA branch migration. The RuvB motors rotate together with the DNA substrate, which together with the progressing nucleotide cycle form the mechanistic basis for DNA recombination by continuous HJ branch migration. Branch migration allows RuvC to scan DNA until it finds its consensus sequence, where it cleaves and resolves cruciform DNA. This Bacillus cereus (strain Q1) protein is Holliday junction branch migration complex subunit RuvB.